We begin with the raw amino-acid sequence, 294 residues long: N-acetylmuramic acid 6-phosphate etherase (294 aa).

The SIS domain maps to 54-217 (VIQSFEEEGR…STASMIGVGK (164 aa)). Glu82 acts as the Proton donor in catalysis. The active site involves Glu113.

Belongs to the GCKR-like family. MurNAc-6-P etherase subfamily. Homodimer.

The enzyme catalyses N-acetyl-D-muramate 6-phosphate + H2O = N-acetyl-D-glucosamine 6-phosphate + (R)-lactate. The protein operates within amino-sugar metabolism; N-acetylmuramate degradation. Specifically catalyzes the cleavage of the D-lactyl ether substituent of MurNAc 6-phosphate, producing GlcNAc 6-phosphate and D-lactate. This Bacillus cereus (strain 03BB102) protein is N-acetylmuramic acid 6-phosphate etherase.